A 227-amino-acid polypeptide reads, in one-letter code: Large ribosomal subunit protein uL3 (227 aa).

Glutamine 151 bears the N5-methylglutamine mark.

This sequence belongs to the universal ribosomal protein uL3 family. As to quaternary structure, part of the 50S ribosomal subunit. Forms a cluster with proteins L14 and L19. Methylated by PrmB.

One of the primary rRNA binding proteins, it binds directly near the 3'-end of the 23S rRNA, where it nucleates assembly of the 50S subunit. The sequence is that of Large ribosomal subunit protein uL3 from Gluconacetobacter diazotrophicus (strain ATCC 49037 / DSM 5601 / CCUG 37298 / CIP 103539 / LMG 7603 / PAl5).